Consider the following 389-residue polypeptide: Putative 8-amino-7-oxononanoate synthase (389 aa).

Arg22 provides a ligand contact to substrate. Residue 109-110 (GY) coordinates pyridoxal 5'-phosphate. His134 serves as a coordination point for substrate. Residues Ser182, 207-210 (DDAH), and 238-241 (TLSK) contribute to the pyridoxal 5'-phosphate site. Lys241 is modified (N6-(pyridoxal phosphate)lysine). Substrate is bound at residue Thr350.

The protein belongs to the class-II pyridoxal-phosphate-dependent aminotransferase family. BioF subfamily. As to quaternary structure, homodimer. Requires pyridoxal 5'-phosphate as cofactor.

The enzyme catalyses 6-carboxyhexanoyl-[ACP] + L-alanine + H(+) = (8S)-8-amino-7-oxononanoate + holo-[ACP] + CO2. It participates in cofactor biosynthesis; biotin biosynthesis. Functionally, catalyzes the decarboxylative condensation of pimeloyl-[acyl-carrier protein] and L-alanine to produce 8-amino-7-oxononanoate (AON), [acyl-carrier protein], and carbon dioxide. This is Putative 8-amino-7-oxononanoate synthase (bioF) from Parvibaculum lavamentivorans (strain DS-1 / DSM 13023 / NCIMB 13966).